Consider the following 607-residue polypeptide: NAD-dependent malic enzyme 2, mitochondrial (607 aa).

A mitochondrion-targeting transit peptide spans Met-1–Pro-32. Catalysis depends on Tyr-136, which acts as the Proton donor. Position 189 (Arg-189) interacts with NAD(+). Lys-207 acts as the Proton acceptor in catalysis. A divalent metal cation-binding residues include Glu-278, Asp-279, and Asp-302. Asp-302 and Asn-449 together coordinate NAD(+).

Belongs to the malic enzymes family. As to quaternary structure, homodimer. Heterodimer of two related subunits in NAD-MEH complex. Interacts with NAD-ME1. Requires Mg(2+) as cofactor. Mn(2+) is required as a cofactor. In terms of tissue distribution, expressed in leaves, stems, flowers, and roots (at protein level). Present in pollen.

It localises to the mitochondrion. The enzyme catalyses (S)-malate + NAD(+) = pyruvate + CO2 + NADH. With respect to regulation, activated by 2-ketoglutarate, phosphoenolpyruvate (PEP), fructose 1,6-biphosphate (FBP) and coenzyme A (acetyl-CoA and CoA) as homodimer and by oxaloacetate (OAA), 2-ketoglutarate, succinate, fumarate and CoA as heterodimer NAD-MEH. Repressed by succinate and fumarate as homodimer, in the presence of NAD(+) and competitively toward the substrate L-malate. Involved in the regulation of sugars and amino acids metabolisms during the night period. This chain is NAD-dependent malic enzyme 2, mitochondrial (NAD-ME2), found in Arabidopsis thaliana (Mouse-ear cress).